The following is a 135-amino-acid chain: Centromere protein S (135 aa).

Positions 103–135 are disordered; that stretch reads SLEQKEKKKKKSVSGGNVSRNSDMDTVVPESKD.

It belongs to the TAF9 family. CENP-S/MHF1 subfamily. In terms of assembly, heterodimer with CENPX, sometimes called MHF; this interaction stabilizes both partners. MHF heterodimers can assemble to form tetrameric structures. MHF also coassemble with CENPT-CENPW heterodimers at centromeres to form the tetrameric CENP-T-W-S-X complex. Forms a discrete complex with FANCM and CENPX, called FANCM-MHF; this interaction, probably mediated by direct binding between CENPS and FANCM, leads to synergistic activation of double-stranded DNA binding and strongly stimulates FANCM-mediated DNA remodeling. Recruited by FANCM to the Fanconi anemia (FA) core complex, which consists of CENPS, CENPX, FANCA, FANCB, FANCC, FANCE, FANCF, FANCG, FANCL, FANCM, FAAP24 and FAAP100. The FA core complex associates with Bloom syndrome (BLM) complex, which consists of at least BLM, DNA topoisomerase 3-alpha (TOP3A), RMI1/BLAP75, RPA1/RPA70 and RPA2/RPA32. The super complex between FA and BLM is called BRAFT. Component of the CENPA-CAD complex, composed of CENPI, CENPK, CENPL, CENPO, CENPP, CENPQ, CENPR and CENPS. The CENPA-CAD complex is probably recruited on centromeres by the CENPA-NAC complex, at least composed of CENPA, CENPC, CENPH, CENPM, CENPN, CENPT and CENPU.

The protein resides in the nucleus. It localises to the chromosome. The protein localises to the centromere. It is found in the kinetochore. In terms of biological role, DNA-binding component of the Fanconi anemia (FA) core complex. Required for the normal activation of the FA pathway, leading to monoubiquitination of the FANCI-FANCD2 complex in response to DNA damage, cellular resistance to DNA cross-linking drugs, and prevention of chromosomal breakage. In complex with CENPX (MHF heterodimer), crucial cofactor for FANCM in both binding and ATP-dependent remodeling of DNA. Stabilizes FANCM. In complex with CENPX and FANCM (but not other FANC proteins), rapidly recruited to blocked forks and promotes gene conversion at blocked replication forks. In complex with CENPT, CENPW and CENPX (CENP-T-W-S-X heterotetramer), involved in the formation of a functional kinetochore outer plate, which is essential for kinetochore-microtubule attachment and faithful mitotic progression. As a component of MHF and CENP-T-W-S-X complexes, binds DNA and bends it to form a nucleosome-like structure. DNA-binding function is fulfilled in the presence of CENPX, with the following preference for DNA substates: Holliday junction &gt; double-stranded &gt; splay arm &gt; single-stranded. Does not bind DNA on its own. The chain is Centromere protein S (cenps) from Xenopus laevis (African clawed frog).